The chain runs to 173 residues: RNA pyrophosphohydrolase (173 aa).

In terms of domain architecture, Nudix hydrolase spans 6–149 (GFRANVGIII…KRDVYRKVMK (144 aa)). Positions 38 to 59 (GGVDEGESAEEAMYRELYEEVG) match the Nudix box motif.

Belongs to the Nudix hydrolase family. RppH subfamily. Requires a divalent metal cation as cofactor.

In terms of biological role, accelerates the degradation of transcripts by removing pyrophosphate from the 5'-end of triphosphorylated RNA, leading to a more labile monophosphorylated state that can stimulate subsequent ribonuclease cleavage. The chain is RNA pyrophosphohydrolase from Shewanella piezotolerans (strain WP3 / JCM 13877).